A 466-amino-acid chain; its full sequence is Histidine--tRNA ligase (466 aa).

This sequence belongs to the class-II aminoacyl-tRNA synthetase family. In terms of assembly, homodimer.

The protein localises to the cytoplasm. The enzyme catalyses tRNA(His) + L-histidine + ATP = L-histidyl-tRNA(His) + AMP + diphosphate + H(+). The polypeptide is Histidine--tRNA ligase (hisS) (Bifidobacterium longum (strain NCC 2705)).